The following is a 44-amino-acid chain: Phosphatase RapE inhibitor (44 aa).

Propeptides lie at residues 1-30 and 36-44; these read MKSKLFISLSAVLIGLAFFGSMYNGEMKEA and LAPTHEFLV.

The protein belongs to the Phr family. Contains a predicted signal peptide cleavage site in the N-terminal region, however the propeptide is probably only subject to processing events at the ends of the mature peptide.

Its subcellular location is the secreted. The protein localises to the cytoplasm. Functionally, signaling molecule involved in the regulation of sporulation. Secreted during production, but the mature peptide acts intracellularly, indicating that it needs to be imported into the cell to function. Inhibitor of the RapE phosphatase activity. Does not inhibit the phosphatase activity of RapA and RapB. Probably plays a dispensable role in the overall context of sporulation initiation. The protein is Phosphatase RapE inhibitor (phrE) of Bacillus subtilis (strain 168).